A 584-amino-acid chain; its full sequence is Protein spire homolog 1 (584 aa).

A disordered region spans residues 1 to 30 (MANTVEADGSNDEGYEAAEEGPEDEEDEKR). One can recognise a KIND domain in the interval 1–73 (MANTVEADGS…RALFAETMEL (73 aa)). Over residues 9–28 (GSNDEGYEAAEEGPEDEEDE) the composition is skewed to acidic residues. Residues 71–99 (MELHTFLAKVKSAKENLKKIQEMEKSDES) are a coiled coil. WH2 domains follow at residues 147-165 (PYEM…LRKV) and 211-228 (LHER…LRPV). Positions 224–238 (KLRPVSPEEIRRSRL) are enriched in basic and acidic residues. Residues 224 to 366 (KLRPVSPEEI…PTNVRQFLPP (143 aa)) are disordered. Serine 229 carries the phosphoserine modification. Residues 242–272 (TPESTKNLMESSMVNGGLTSQTKENGLSSAE) show a composition bias toward polar residues. Serine 292, serine 293, and serine 295 each carry phosphoserine. Residues 302 to 320 (KSTSSSSVSPSFPEEPVLE) show a composition bias toward low complexity. Position 337 is a phosphothreonine (threonine 337). Residues 340–356 (PERRQPPQRRHSIEKET) show a composition bias toward basic and acidic residues. Over residues 357-366 (PTNVRQFLPP) the composition is skewed to polar residues. The segment at 384–404 (LALTVEEVMHIRQVLVKAELE) is spir-box. Phosphoserine occurs at positions 506, 510, and 563.

Belongs to the spire family. Interacts with FMN2.

Its subcellular location is the cytoplasm. The protein localises to the cytoskeleton. The protein resides in the cytosol. It is found in the cleavage furrow. It localises to the perinuclear region. Its subcellular location is the cell membrane. The protein localises to the cytoplasmic vesicle membrane. Acts as an actin nucleation factor, remains associated with the slow-growing pointed end of the new filament. Involved in intracellular vesicle transport along actin fibers, providing a novel link between actin cytoskeleton dynamics and intracellular transport. Required for asymmetric spindle positioning and asymmetric cell division during meiosis. Required for normal formation of the cleavage furrow and for polar body extrusion during female germ cell meiosis. Also acts in the nucleus: together with FMN2, promotes assembly of nuclear actin filaments in response to DNA damage in order to facilitate movement of chromatin and repair factors after DNA damage. In addition, promotes innate immune signaling downstream of dsRNA sensing. Mechanistically, contributes to IRF3 phosphorylation and activation downstream of MAVS and upstream of TBK1. This is Protein spire homolog 1 (SPIRE1) from Macaca fascicularis (Crab-eating macaque).